The sequence spans 132 residues: D-ribose pyranase (132 aa).

Catalysis depends on H20, which acts as the Proton donor. Residues D28, H99, and Y121–N123 each bind substrate.

Belongs to the RbsD / FucU family. RbsD subfamily. As to quaternary structure, homodecamer.

The protein localises to the cytoplasm. It catalyses the reaction beta-D-ribopyranose = beta-D-ribofuranose. It participates in carbohydrate metabolism; D-ribose degradation; D-ribose 5-phosphate from beta-D-ribopyranose: step 1/2. Catalyzes the interconversion of beta-pyran and beta-furan forms of D-ribose. This is D-ribose pyranase from Pseudomonas putida (strain W619).